The primary structure comprises 144 residues: Large ribosomal subunit protein uL15 (144 aa).

The disordered stretch occupies residues 1-53 (MRLNTLSPAEGAKHAPKRVGRGIGSGLGKTGGRGHKGQKSRSGGGVRRGFEGG). Residues 21–31 (RGIGSGLGKTG) show a composition bias toward gly residues.

This sequence belongs to the universal ribosomal protein uL15 family. As to quaternary structure, part of the 50S ribosomal subunit.

In terms of biological role, binds to the 23S rRNA. This chain is Large ribosomal subunit protein uL15, found in Proteus mirabilis (strain HI4320).